The following is a 362-amino-acid chain: Hepatic sodium/bile acid cotransporter (362 aa).

Residues 1 to 22 (MEVHNVSAPFNFSLPPGFGHRA) are Extracellular-facing. Asn-5 and Asn-11 each carry an N-linked (GlcNAc...) asparagine glycan. The chain crosses the membrane as a helical span at residues 23 to 44 (TDKALSIILVLMLLLIMLSLGC). At 45–47 (TME) the chain is on the cytoplasmic side. The chain crosses the membrane as a helical span at residues 48–83 (FSKIKAHLWKPKGVIVALVAQFGIMPLAAFLLGKIF). The Extracellular segment spans residues 84–86 (HLS). The discontinuously helical transmembrane segment at 87–112 (NIEALAILICGCSPGGNLSNLFTLAM) threads the bilayer. Over 113–115 (KGD) the chain is Cytoplasmic. A helical membrane pass occupies residues 116–142 (MNLSIVMTTCSSFSALGMMPLLLYVYS). The Extracellular portion of the chain corresponds to 143–156 (KGIYDGDLKDKVPY). The helical transmembrane segment at 157 to 179 (KGIMISLVIVLIPCTIGIVLKSK) threads the bilayer. Over 180–183 (RPHY) the chain is Cytoplasmic. Residues 184-217 (VPYILKGGMIITFLLSVAVTALSVINVGNSIMFV) form a helical membrane-spanning segment. At 218 to 219 (MT) the chain is on the extracellular side. A helical membrane pass occupies residues 220 to 243 (PHLLATSSLMPFSGFLMGYILSAL). Residues 244–247 (FQLN) are Cytoplasmic-facing. Residues 248 to 273 (PSCRRTISMETGFQNIQLCSTILNVT) traverse the membrane as a discontinuously helical segment. Over 274 to 280 (FPPEVIG) the chain is Extracellular. A helical membrane pass occupies residues 281 to 311 (PLFFFPLLYMIFQLAEGLLIIIIFRCYEKIK). At 312–362 (PPKDQTKITYKAAATEDATPAALEKGTHNGNIPPLQPGPSPNGLNSGQMAN) the chain is on the cytoplasmic side. Thr-330 is subject to Phosphothreonine. The segment at 333–362 (ALEKGTHNGNIPPLQPGPSPNGLNSGQMAN) is disordered. Positions 353–362 (NGLNSGQMAN) are enriched in polar residues.

This sequence belongs to the bile acid:sodium symporter (BASS) (TC 2.A.28) family. Highly expressed in liver and low expression in kidney.

It is found in the cell membrane. It carries out the reaction taurocholate(out) + 2 Na(+)(out) = taurocholate(in) + 2 Na(+)(in). The catalysed reaction is taurochenodeoxycholate(out) + 2 Na(+)(out) = taurochenodeoxycholate(in) + 2 Na(+)(in). It catalyses the reaction tauroursodeoxycholate(out) + 2 Na(+)(out) = tauroursodeoxycholate(in) + 2 Na(+)(in). The enzyme catalyses glycocholate(out) + 2 Na(+)(out) = glycocholate(in) + 2 Na(+)(in). It carries out the reaction estrone 3-sulfate(out) + 2 Na(+)(out) = estrone 3-sulfate(in) + 2 Na(+)(in). The catalysed reaction is cholate(out) + 2 Na(+)(out) = cholate(in) + 2 Na(+)(in). It catalyses the reaction tauronorcholate(out) + 2 Na(+)(out) = tauronorcholate(in) + 2 Na(+)(in). The enzyme catalyses taurodeoxycholate(out) + 2 Na(+)(out) = taurodeoxycholate(in) + 2 Na(+)(in). It carries out the reaction tauroallocholate(out) + 2 Na(+)(out) = tauroallocholate(in) + 2 Na(+)(in). The catalysed reaction is taurohyodeoxycholate(out) + 2 Na(+)(out) = taurohyodeoxycholate(in) + 2 Na(+)(in). It catalyses the reaction taurohyocholate(out) + 2 Na(+)(out) = taurohyocholate(in) + 2 Na(+)(in). The enzyme catalyses tauro-beta-muricholate(out) + 2 Na(+)(out) = tauro-beta-muricholate(in) + 2 Na(+)(in). The transport of bile acids is sodium-dependent. Its function is as follows. As a major transporter of conjugated bile salts from plasma into the hepatocyte, it plays a key role in the enterohepatic circulation of bile salts necessary for the solubilization and absorption of dietary fat and fat-soluble vitamins. It is strictly dependent on the extracellular presence of sodium. It exhibits broad substrate specificity and transports various bile acids, such as taurocholate, cholate, as well as non-bile acid organic compounds, such as estrone sulfate. Works collaboratively with the ileal transporter (NTCP2), the organic solute transporter (OST), and the bile salt export pump (BSEP), to ensure efficacious biological recycling of bile acids during enterohepatic circulation. In Rattus norvegicus (Rat), this protein is Hepatic sodium/bile acid cotransporter (Slc10a1).